Consider the following 143-residue polypeptide: Hemoglobin subunit alpha-1 (143 aa).

N-acetylserine is present on Ser-2. The Globin domain maps to 2 to 143 (SLSAKDKATV…LALALCEKYR (142 aa)). Residue His-60 participates in O2 binding. A heme b-binding site is contributed by His-89.

Belongs to the globin family. In terms of assembly, hb 1 is a heterotetramer of two alpha-1 and two beta-1 chains. As to expression, red blood cells.

Involved in oxygen transport from gills to the various peripheral tissues. In Boreogadus saida (Polar cod), this protein is Hemoglobin subunit alpha-1 (hba1).